A 503-amino-acid polypeptide reads, in one-letter code: Transcription termination/antitermination protein NusA (503 aa).

Residues 139-203 (GDIINGIVKR…KGPQIFLSRV (65 aa)) enclose the S1 motif domain. Residues 308 to 378 (SHKVEVVVSQ…LDVEEVIGQL (71 aa)) enclose the KH domain.

Belongs to the NusA family. In terms of assembly, monomer. Binds directly to the core enzyme of the DNA-dependent RNA polymerase and to nascent RNA.

It is found in the cytoplasm. Its function is as follows. Participates in both transcription termination and antitermination. This is Transcription termination/antitermination protein NusA from Rickettsia prowazekii (strain Madrid E).